A 315-amino-acid chain; its full sequence is Cysteine synthase (315 aa).

Residues Asn-8 and Arg-35 each coordinate hydrogen sulfide. N6-(pyridoxal phosphate)lysine is present on Lys-42. Pyridoxal 5'-phosphate-binding positions include Asn-72 and 177–181 (GTGGT). Residue Leu-269 participates in hydrogen sulfide binding. Ser-273 contributes to the pyridoxal 5'-phosphate binding site.

Belongs to the cysteine synthase/cystathionine beta-synthase family. As to quaternary structure, homodimer. Requires pyridoxal 5'-phosphate as cofactor.

It carries out the reaction O-acetyl-L-serine + hydrogen sulfide = L-cysteine + acetate. It participates in amino-acid biosynthesis; L-cysteine biosynthesis; L-cysteine from L-serine: step 2/2. This Buchnera aphidicola subsp. Acyrthosiphon pisum (strain APS) (Acyrthosiphon pisum symbiotic bacterium) protein is Cysteine synthase (cysK).